The following is a 235-amino-acid chain: N,O-diacetylmuramidase (235 aa).

Residues 1–17 (MKLSLLTVAAAAGAAVA) form the signal peptide. The Ch-type lysozyme domain maps to 29–235 (SVQGFDISGY…DQLQRFAKGG (207 aa)). Residues Asp-34, Asp-122, and Glu-124 contribute to the active site. An intrachain disulfide couples Cys-132 to Cys-171.

It belongs to the glycosyl hydrolase 25 family.

Its subcellular location is the secreted. It carries out the reaction Hydrolysis of (1-&gt;4)-beta-linkages between N-acetylmuramic acid and N-acetyl-D-glucosamine residues in a peptidoglycan and between N-acetyl-D-glucosamine residues in chitodextrins.. This enzyme has both lysozyme (acetylmuramidase) and diacetylmuramidase activities. The polypeptide is N,O-diacetylmuramidase (Arthroderma benhamiae (strain ATCC MYA-4681 / CBS 112371) (Trichophyton mentagrophytes)).